We begin with the raw amino-acid sequence, 170 residues long: Inosine/xanthosine triphosphatase (170 aa).

Belongs to the YjjX NTPase family. Homodimer. It depends on Mg(2+) as a cofactor. Requires Mn(2+) as cofactor.

The enzyme catalyses XTP + H2O = XDP + phosphate + H(+). It catalyses the reaction ITP + H2O = IDP + phosphate + H(+). Its function is as follows. Phosphatase that hydrolyzes non-canonical purine nucleotides such as XTP and ITP to their respective diphosphate derivatives. Probably excludes non-canonical purines from DNA/RNA precursor pool, thus preventing their incorporation into DNA/RNA and avoiding chromosomal lesions. This is Inosine/xanthosine triphosphatase from Aliivibrio fischeri (strain ATCC 700601 / ES114) (Vibrio fischeri).